Consider the following 194-residue polypeptide: Cell division protein SepF (194 aa).

Disordered regions lie at residues 35 to 54 (DHRS…DSSP) and 159 to 194 (SAPS…AGGL).

It belongs to the SepF family. In terms of assembly, homodimer. Interacts with FtsZ.

The protein resides in the cytoplasm. Its function is as follows. Cell division protein that is part of the divisome complex and is recruited early to the Z-ring. Probably stimulates Z-ring formation, perhaps through the cross-linking of FtsZ protofilaments. Its function overlaps with FtsA. The sequence is that of Cell division protein SepF from Prochlorococcus marinus (strain MIT 9313).